We begin with the raw amino-acid sequence, 122 residues long: Large ribosomal subunit protein bL12 (122 aa).

This sequence belongs to the bacterial ribosomal protein bL12 family. Homodimer. Part of the ribosomal stalk of the 50S ribosomal subunit. Forms a multimeric L10(L12)X complex, where L10 forms an elongated spine to which 2 to 4 L12 dimers bind in a sequential fashion. Binds GTP-bound translation factors.

In terms of biological role, forms part of the ribosomal stalk which helps the ribosome interact with GTP-bound translation factors. Is thus essential for accurate translation. The chain is Large ribosomal subunit protein bL12 from Aliivibrio fischeri (strain ATCC 700601 / ES114) (Vibrio fischeri).